Here is a 268-residue protein sequence, read N- to C-terminus: Undecaprenyl-diphosphatase (268 aa).

Helical transmembrane passes span Phe47–Leu67, Phe83–Gly103, Leu109–Val129, Phe144–Val164, Ala184–Leu204, Leu217–Phe237, and Phe246–Leu266.

It belongs to the UppP family.

Its subcellular location is the cell inner membrane. The catalysed reaction is di-trans,octa-cis-undecaprenyl diphosphate + H2O = di-trans,octa-cis-undecaprenyl phosphate + phosphate + H(+). Its function is as follows. Catalyzes the dephosphorylation of undecaprenyl diphosphate (UPP). Confers resistance to bacitracin. The protein is Undecaprenyl-diphosphatase of Rhodopseudomonas palustris (strain BisB18).